Here is a 132-residue protein sequence, read N- to C-terminus: Large ribosomal subunit protein uL14 (132 aa).

This sequence belongs to the universal ribosomal protein uL14 family. Part of the 50S ribosomal subunit. Forms a cluster with proteins L3 and L24e, part of which may contact the 16S rRNA in 2 intersubunit bridges.

Functionally, binds to 23S rRNA. Forms part of two intersubunit bridges in the 70S ribosome. The polypeptide is Large ribosomal subunit protein uL14 (Methanobrevibacter smithii (strain ATCC 35061 / DSM 861 / OCM 144 / PS)).